The chain runs to 121 residues: N-alpha-acetyltransferase 38, NatC auxiliary subunit (121 aa).

Residues 40-113 (PGRRKLQKWL…IVSLSIDEPD (74 aa)) enclose the Sm domain.

It belongs to the snRNP Sm proteins family. Component of the N-terminal acetyltransferase C (NatC) complex, which is composed of Naa35, Sbat/Naa38 and Naa30A. Interacts with Smn and Hez; along with Hez and Vlet, may form an accessory subcomplex involved in SMN complex function.

It is found in the cytoplasm. The protein resides in the nucleus. Its function is as follows. Auxiliary component of the N-terminal acetyltransferase C (NatC) complex which catalyzes acetylation of N-terminal methionine residues. May have an accessory function in the survival motor neuron (SMN) complex. This is N-alpha-acetyltransferase 38, NatC auxiliary subunit from Drosophila melanogaster (Fruit fly).